Reading from the N-terminus, the 192-residue chain is Putative B3 domain-containing protein At4g03160 (192 aa).

Positions 22 to 44 (VFFDQEEEEEDEEEEYDEESVCE) are disordered. Residues 25–44 (DQEEEEEDEEEEYDEESVCE) show a composition bias toward acidic residues. Positions 75–173 (KDNQYRLMLG…EICFAIDSTR (99 aa)) form a DNA-binding region, TF-B3.

It is found in the nucleus. The polypeptide is Putative B3 domain-containing protein At4g03160 (Arabidopsis thaliana (Mouse-ear cress)).